The following is a 145-amino-acid chain: D-aminoacyl-tRNA deacylase (145 aa).

Positions 137-138 match the Gly-cisPro motif, important for rejection of L-amino acids motif; the sequence is GP.

The protein belongs to the DTD family. In terms of assembly, homodimer.

Its subcellular location is the cytoplasm. It catalyses the reaction glycyl-tRNA(Ala) + H2O = tRNA(Ala) + glycine + H(+). The enzyme catalyses a D-aminoacyl-tRNA + H2O = a tRNA + a D-alpha-amino acid + H(+). In terms of biological role, an aminoacyl-tRNA editing enzyme that deacylates mischarged D-aminoacyl-tRNAs. Also deacylates mischarged glycyl-tRNA(Ala), protecting cells against glycine mischarging by AlaRS. Acts via tRNA-based rather than protein-based catalysis; rejects L-amino acids rather than detecting D-amino acids in the active site. By recycling D-aminoacyl-tRNA to D-amino acids and free tRNA molecules, this enzyme counteracts the toxicity associated with the formation of D-aminoacyl-tRNA entities in vivo and helps enforce protein L-homochirality. In Pseudomonas syringae pv. syringae (strain B728a), this protein is D-aminoacyl-tRNA deacylase.